Here is a 141-residue protein sequence, read N- to C-terminus: Nucleoside diphosphate kinase (141 aa).

Residues Lys-11, Phe-59, Arg-87, Thr-93, Arg-104, and Asn-114 each contribute to the ATP site. The active-site Pros-phosphohistidine intermediate is the His-117.

It belongs to the NDK family. As to quaternary structure, homotetramer. It depends on Mg(2+) as a cofactor.

The protein localises to the cytoplasm. It carries out the reaction a 2'-deoxyribonucleoside 5'-diphosphate + ATP = a 2'-deoxyribonucleoside 5'-triphosphate + ADP. It catalyses the reaction a ribonucleoside 5'-diphosphate + ATP = a ribonucleoside 5'-triphosphate + ADP. Its function is as follows. Major role in the synthesis of nucleoside triphosphates other than ATP. The ATP gamma phosphate is transferred to the NDP beta phosphate via a ping-pong mechanism, using a phosphorylated active-site intermediate. This is Nucleoside diphosphate kinase from Herminiimonas arsenicoxydans.